We begin with the raw amino-acid sequence, 281 residues long: Putative E3 ubiquitin-protein ligase SINA-like 6 (281 aa).

Residues 1 to 26 (MVGVLLSERNGSQKRHCSSISSDDGR) are disordered. An RING-type zinc finger spans residues 45–81 (CPICYQALKIPVFQCGNGHLACSSCCPKLRNKCPACA). The tract at residues 95–280 (VLESVLVPCR…MMLCINELKQ (186 aa)) is SBD. The segment at 98–156 (SVLVPCRYADLGCTKTIYYGRESTHEKICNFSPCSCPVQGCNYTGSYKDLYEHYDLTHS) adopts an SIAH-type zinc-finger fold. Residues cysteine 103, cysteine 110, histidine 122, cysteine 126, cysteine 133, cysteine 138, histidine 150, and histidine 155 each contribute to the Zn(2+) site.

Belongs to the SINA (Seven in absentia) family.

It carries out the reaction S-ubiquitinyl-[E2 ubiquitin-conjugating enzyme]-L-cysteine + [acceptor protein]-L-lysine = [E2 ubiquitin-conjugating enzyme]-L-cysteine + N(6)-ubiquitinyl-[acceptor protein]-L-lysine.. It functions in the pathway protein modification; protein ubiquitination. Its function is as follows. E3 ubiquitin-protein ligase that mediates ubiquitination and subsequent proteasomal degradation of target proteins. E3 ubiquitin ligases accept ubiquitin from an E2 ubiquitin-conjugating enzyme in the form of a thioester and then directly transfers the ubiquitin to targeted substrates. It probably triggers the ubiquitin-mediated degradation of different substrates. The protein is Putative E3 ubiquitin-protein ligase SINA-like 6 of Arabidopsis thaliana (Mouse-ear cress).